The chain runs to 69 residues: VLIIAVLFLTACQLTTAETYSRGRQKHRARRSTDKNSKWTRECTRSGGACNSHTQCCDDFCSTATSTCI.

A signal peptide spans 1–17 (VLIIAVLFLTACQLTTA). Residues 18 to 41 (ETYSRGRQKHRARRSTDKNSKWTR) constitute a propeptide that is removed on maturation. Disulfide bonds link Cys-43–Cys-57, Cys-50–Cys-61, and Cys-56–Cys-68.

The protein belongs to the conotoxin O1 superfamily. Expressed by the venom duct.

Its subcellular location is the secreted. The sequence is that of Conotoxin Eb6.9 (E1) from Conus ebraeus (Hebrew cone).